Consider the following 317-residue polypeptide: Protoheme IX farnesyltransferase (317 aa).

A run of 9 helical transmembrane segments spans residues 39 to 58 (VMSL…PGSL), 62 to 84 (LGAI…NMWY), 100 to 120 (IPAG…LAVG), 123 to 143 (LVMW…AIFF), 160 to 180 (IVIG…AVTG), 184 to 204 (LMPV…FWSL), 233 to 253 (IMAY…LGDT), 256 to 276 (VYGL…WRVL), and 293 to 313 (ARAA…ALAV).

The protein belongs to the UbiA prenyltransferase family. Protoheme IX farnesyltransferase subfamily.

It localises to the cell inner membrane. The catalysed reaction is heme b + (2E,6E)-farnesyl diphosphate + H2O = Fe(II)-heme o + diphosphate. Its pathway is porphyrin-containing compound metabolism; heme O biosynthesis; heme O from protoheme: step 1/1. Converts heme B (protoheme IX) to heme O by substitution of the vinyl group on carbon 2 of heme B porphyrin ring with a hydroxyethyl farnesyl side group. The chain is Protoheme IX farnesyltransferase from Granulibacter bethesdensis (strain ATCC BAA-1260 / CGDNIH1).